Reading from the N-terminus, the 1159-residue chain is WASH complex subunit 5 (1159 aa).

A Phosphoserine modification is found at S917.

The protein belongs to the strumpellin family. In terms of assembly, component of the WASH core complex also described as WASH regulatory complex (SHRC) composed of WASH (WASHC1, WASH2P or WASH3P), WASHC2 (WASHC2A or WASHC2C), WASHC3, WASHC4 and WASHC5. The WASH core complex associates via WASHC2 with the F-actin-capping protein dimer (formed by CAPZA1, CAPZA2 or CAPZA3 and CAPZB) in a transient or substoichiometric manner which was initially described as WASH complex. Interacts with VCP, PI4K2A. As to expression, expressed ubiquitously.

It localises to the cytoplasm. The protein localises to the cytosol. It is found in the endoplasmic reticulum. Its subcellular location is the early endosome. Functionally, acts as a component of the WASH core complex that functions as a nucleation-promoting factor (NPF) at the surface of endosomes, where it recruits and activates the Arp2/3 complex to induce actin polymerization, playing a key role in the fission of tubules that serve as transport intermediates during endosome sorting. May be involved in axonal outgrowth. Involved in cellular localization of ADRB2. Involved in cellular trafficking of BLOC-1 complex cargos such as ATP7A and VAMP7. This Homo sapiens (Human) protein is WASH complex subunit 5.